A 593-amino-acid polypeptide reads, in one-letter code: RNA-binding protein 47 (593 aa).

The span at 1 to 20 (MTAEDSTAAMSSDSAAGSSA) shows a compositional bias: low complexity. Residues 1–25 (MTAEDSTAAMSSDSAAGSSAKVPEG) form a disordered region. 3 consecutive RRM domains span residues 71-149 (CEVF…CSVD), 151-233 (CRLF…WAEP), and 246-318 (KILY…LAKP). At Arg-332 the chain carries Omega-N-methylarginine. An asymmetric dimethylarginine; alternate mark is found at Arg-394 and Arg-405. Arg-394 and Arg-405 each carry omega-N-methylarginine; alternate.

The protein belongs to the RRM RBM47 family. In terms of assembly, homodimer. Interacts with A1CF. Interacts with APOBEC1; form an mRNA editing complex. Interacts with RBPMS.

It localises to the nucleus. Its subcellular location is the cytoplasm. Functionally, single-stranded RNA-binding protein that functions in a variety of RNA processes, including alternative splicing, RNA stabilization, and RNA editing. Functions as an enzyme-substrate adapter for the cytidine deaminase APOBEC1. With APOBEC1 forms an mRNA editing complex involved into cytidine to uridine editing of a variety of mRNA molecules. Through the binding of their 3'UTR, also stabilizes a variety of mRNAs and regulates the expression of genes such as the interferon alpha/beta receptor and interleukin-10. Also involved in the alternative splicing of several genes including TJP1. Binds the pre-mRNA (U)GCAUG consensus sequences in downstream intronic regions of alternative exons, regulating their exclusion and inclusion into mRNAs. Independently of its RNA-binding activity, could negatively regulate MAVS by promoting its lysosomal degradation. In Homo sapiens (Human), this protein is RNA-binding protein 47.